We begin with the raw amino-acid sequence, 442 residues long: Cyclic AMP receptor-like protein B (442 aa).

Residues 1-16 lie on the Extracellular side of the membrane; the sequence is MGGDIHLCSMILGKNH. The helical transmembrane segment at 17-37 threads the bilayer; the sequence is LIFLYFANLFGSTLSFLATII. Residues 38 to 219 are Cytoplasmic-facing; sequence TIVFYLVKKY…PKKIDTLIFY (182 aa). The tract at residues 83-166 is disordered; the sequence is YSSTPISIQN…LSSSDKNNTI (84 aa). Low complexity predominate over residues 91–103; it reads QNNNNKNNNLPKQ. Polar residues predominate over residues 112 to 122; it reads INKNHNNYCNY. Positions 123-144 are enriched in low complexity; that stretch reads STSATSSSSSSSSFSSTNSGSS. The segment covering 145-166 has biased composition (polar residues); the sequence is YEYQQPQKNQQTLSSSDKNNTI. The helical transmembrane segment at 220 to 240 threads the bilayer; sequence LSISDFIAVSGIIIEQLIIIF. Residues 241 to 255 lie on the Extracellular side of the membrane; it reads NKEISKSIGFCIGER. Residues 256-276 traverse the membrane as a helical segment; sequence VSIHFGLLATLFWSNCIAYYL. At 277–289 the chain is on the cytoplasmic side; sequence LRETYELKPYNIR. Residues 290–310 traverse the membrane as a helical segment; it reads FVYFHIVCWGMALIGVASLFF. Over 311–334 the chain is Extracellular; the sequence is SKIITVSNIDQGGSWCSVSSSYQL. A helical membrane pass occupies residues 335-355; sequence YFWVIPLFVSFTWNLICYCLI. Over 356–382 the chain is Cytoplasmic; sequence YRKFNKIIGIYGIQSVQIKTIIIRKLS. The helical transmembrane segment at 383-403 threads the bilayer; sequence FYLLAFLITWVWDVINNSIFL. At 404–410 the chain is on the extracellular side; it reads YEGKCPP. The chain crosses the membrane as a helical span at residues 411-431; it reads FALWILQEFFSSGYGFFNSLA. The Cytoplasmic segment spans residues 432–442; that stretch reads YAVTTRFYSRK.

Belongs to the G-protein coupled receptor 5 family.

Its subcellular location is the membrane. Receptor for cAMP. This is Cyclic AMP receptor-like protein B (crlB) from Dictyostelium discoideum (Social amoeba).